A 123-amino-acid polypeptide reads, in one-letter code: uncharacterized protein (123 aa).

Residues 89 to 123 are disordered; the sequence is GVGGRKLGSEGQSLSENSEQRSLMRWGCGGSSERR. The segment covering 98–109 has biased composition (polar residues); sequence EGQSLSENSEQR.

This is an uncharacterized protein from Encephalitozoon cuniculi (strain GB-M1) (Microsporidian parasite).